Here is a 996-residue protein sequence, read N- to C-terminus: Oxysterol-binding protein homolog 3 (996 aa).

The tract at residues 1–183 (METIDIQNRS…KKKILFNASV (183 aa)) is GOLD domain. Residues 75–114 (GSSSNIEEHHRRSSQHSHSSSNGSDNKRKERSYSSLSISG) are disordered. Phosphoserine is present on residues serine 190 and serine 193. A Phosphothreonine modification is found at threonine 210. The PH domain occupies 221–315 (GRYLQGYLLK…WVDALQTCFD (95 aa)). A Phosphothreonine modification is found at threonine 323. At serine 324 the chain carries Phosphoserine. Residues threonine 325 and threonine 352 each carry the phosphothreonine modification. Residues 338–372 (EVINKSSPQDHDHLTPTATTKSALSHRQHTQKDMD) form a disordered region. The short motif at 514–520 (EFFDAEE) is the FFAT element. The interval 556–611 (KEVQLSGSEQIASSSVESYTTNDENHSRKHLKNRHKNRRRGHPHHQKTKSAQSSTE) is disordered. A compositionally biased stretch (polar residues) spans 558–577 (VQLSGSEQIASSSVESYTTN). Residues 582-603 (SRKHLKNRHKNRRRGHPHHQKT) are compositionally biased toward basic residues. Phosphoserine is present on serine 605. Positions 642–982 (SLLSFLRKNV…YITGPKSYWE (341 aa)) are OSBP-related domain (ORD). Residues 657-660 (SIAM), lysine 717, 745-746 (HR), and 945-949 (EQLQR) each bind a 1,2-diacyl-sn-glycero-3-phospho-(1D-myo-inositol 4-phosphate).

This sequence belongs to the OSBP family. Interacts with SCS2.

It is found in the cytoplasm. The protein resides in the endoplasmic reticulum membrane. Functionally, lipid transport protein (LTP) involved in non-vesicular transfer of lipids between membranes. Functions in phosphoinositide-coupled directional transport of various lipids by carrying the lipid molecule in a hydrophobic pocket and transferring it between membranes through the cytosol. Involved in maintenance of intracellular sterol distribution and homeostasis. May serve as a sensor of PI4P levels at PM-ER membrane contact site, regulating PI4P phosphatase SAC1 activity. May be involved in ergosterol transport from the plasma membrane (PM) to the ER, however it does not bind sterols directly. Plays a role in the positive regulation of vesicular transport of ceramide from the ER to the Golgi, negatively regulating COPII-mediated ER export of cargos. This chain is Oxysterol-binding protein homolog 3, found in Saccharomyces cerevisiae (strain ATCC 204508 / S288c) (Baker's yeast).